The following is a 160-amino-acid chain: Cell cycle regulator of non-homologous end joining (160 aa).

Met1 carries the post-translational modification N-acetylmethionine. The KBM signature appears at 1 to 21 (METLKSDNKKRVLPSWMTAPG). A disordered region spans residues 78–152 (KPWEQPSLVA…EGKEEEDELK (75 aa)). Low complexity predominate over residues 99–109 (ESPHTSSPGSS). The XLM signature appears at 150–160 (ELKYVREIFFS).

Interacts (via KBM motif) with XRCC5/Ku80 and XRCC6/Ku70 heterodimer. Interacts (via XLF motif) with TRIM28/KAP1, ATM, MRE11, NBN and RAD50. Interacts with splicing factor SF3B1. Interacts with ERCC6L2; this interaction is DNA independent.

The protein localises to the cytoplasm. It is found in the nucleus. It localises to the chromosome. Its function is as follows. Cell-cycle-specific regulator of classical non-homologous end joining (NHEJ) of DNA double-strand break (DSB) repair, which can act both as an activator or inhibitor of NHEJ, depending on the cell cycle phase. Acts as a regulator of DNA repair pathway choice by specifically inhibiting classical NHEJ during the S and G2 phases, thereby promoting error-free repair by homologous recombination during cell cycle phases when sister chromatids are present. Preferentially protects single-stranded overhangs at break sites by inhibiting classical NHEJ, thereby creating a local environment that favors homologous recombination. Acts via interaction with XRCC5/Ku80 and XRCC6/Ku70. In contrast, acts as an activator of NHEJ during G1 phase of the cell cycle: promotes classical NHEJ in G1 phase cells via multivalent interactions that increase the affinity of DNA damage response proteins for DSB-associated chromatin. Also involved in immunoglobulin V(D)J recombination. May also act as an indirect regulator of proteasome. The protein is Cell cycle regulator of non-homologous end joining of Rattus norvegicus (Rat).